The chain runs to 430 residues: Anaerobic glycerol-3-phosphate dehydrogenase subunit B (430 aa).

The protein belongs to the anaerobic G-3-P dehydrogenase subunit B family. In terms of assembly, composed of a catalytic GlpA/B dimer and of membrane bound GlpC. It depends on FMN as a cofactor.

It carries out the reaction a quinone + sn-glycerol 3-phosphate = dihydroxyacetone phosphate + a quinol. Its pathway is polyol metabolism; glycerol degradation via glycerol kinase pathway; glycerone phosphate from sn-glycerol 3-phosphate (anaerobic route): step 1/1. In terms of biological role, conversion of glycerol 3-phosphate to dihydroxyacetone. Uses fumarate or nitrate as electron acceptor. This chain is Anaerobic glycerol-3-phosphate dehydrogenase subunit B, found in Actinobacillus succinogenes (strain ATCC 55618 / DSM 22257 / CCUG 43843 / 130Z).